We begin with the raw amino-acid sequence, 192 residues long: Cytochrome b-245 light chain (192 aa).

Over 2–7 the chain is Cytoplasmic; it reads GQIEWA. A helical transmembrane segment spans residues 8 to 30; it reads MWANEQALASGLILITGGIVATA. Over 31 to 35 the chain is Extracellular; sequence GRFTQ. Residues 36 to 53 form a helical membrane-spanning segment; the sequence is WYFGAYSIVAGVLICLLE. Over 54 to 69 the chain is Cytoplasmic; that stretch reads YPRGKRKKGSTMERCG. The stretch at 70–80 is an intramembrane region; sequence QKYLTAVVKLF. Topologically, residues 81 to 86 are cytoplasmic; it reads GPLTRN. The chain crosses the membrane as a helical span at residues 87–104; that stretch reads YYVRAVLHLLLSVPAGFL. Residue Leu-105 is a topological domain, extracellular. Residues 106-126 form a helical membrane-spanning segment; the sequence is ATILGTVCLAIASVIYLLAAI. The Cytoplasmic portion of the chain corresponds to 127–192; sequence RGEQWTPIEP…NPIPVTDEVV (66 aa). The disordered stretch occupies residues 134-192; the sequence is IEPKPKERPQVGGTIKQPPTNPPPRPPAEVRKKPSEAEEEAASAGGPQVNPIPVTDEVV. Phosphothreonine is present on Thr-147. Lys-149 participates in a covalent cross-link: Glycyl lysine isopeptide (Lys-Gly) (interchain with G-Cter in ubiquitin). Phosphoserine occurs at positions 168 and 176.

Belongs to the p22phox family. Component of the phagocyte NADPH oxidase core complex/cytochrome b558 complex, composed of CYBB (heavy chain (beta)) and CYBA (light chain (alpha)). Component of the phagocyte NADPH oxidase complex composed of an obligatory core heterodimer formed by the membrane proteins CYBA and CYBB and the cytosolic regulatory subunits NCF1/p47-phox, NCF2/p67-phox, NCF4/p40-phox and the small GTPase RAC1 or RAC2. Interacts with NCF1 (via SH3 domain). Interacts with SH3PXD2A. Interacts with DUOX1, DUOX2 and TPO. Interacts with NOX4; this interaction mediates superoxide generation. Interacts with calprotectin (S100A8/9). Interacts with GBP7. Interacts with NOXO1. Forms a heterodimer with NOX3 and is essential for activity and cell membrane localization of NOX3. Interacts with NOX1. Phosphorylation at Thr-147 enhances NADPH oxidase activity by promoting NCF1/p47-phox binding. Post-translationally, ubiquitinated at Lys-149 likely by RNF145. In terms of tissue distribution, expressed to a relatively high level in kidney, spleen, thymus and lung, and to a lower level in aorta, adrenals, and heart. Expression is not detected in liver or brain.

It is found in the cell membrane. Its function is as follows. Subunit of NADPH oxidase complexes that is required for the NADPH oxidase activity that generates, in various cell types, superoxide from molecular oxygen utilizing NADPH as an electron donor. Subunit of the phagocyte NADPH oxidase complex that mediates the transfer of electrons from cytosolic NADPH to O2 to produce the superoxide anion (O2(-)). In the activated complex, electrons are first transferred from NADPH to flavin adenine dinucleotide (FAD) and subsequently transferred via two heme molecules to molecular oxygen, producing superoxide through an outer-sphere reaction. Activation of the NADPH oxidase complex is initiated by the assembly of cytosolic subunits of the NADPH oxidase complex with the core NADPH oxidase complex to form a complex at the plasma membrane or phagosomal membrane. This activation process is initiated by phosphorylation dependent binding of the cytosolic NCF1/p47-phox subunit to the C-terminus of CYBA/p22-phox. Aassociates with NOX3 to form a functional NADPH oxidase constitutively generating superoxide. The sequence is that of Cytochrome b-245 light chain from Rattus norvegicus (Rat).